The following is a 118-amino-acid chain: Putative pterin-4-alpha-carbinolamine dehydratase (118 aa).

It belongs to the pterin-4-alpha-carbinolamine dehydratase family.

It carries out the reaction (4aS,6R)-4a-hydroxy-L-erythro-5,6,7,8-tetrahydrobiopterin = (6R)-L-erythro-6,7-dihydrobiopterin + H2O. The polypeptide is Putative pterin-4-alpha-carbinolamine dehydratase (Pseudomonas fluorescens (strain ATCC BAA-477 / NRRL B-23932 / Pf-5)).